A 349-amino-acid chain; its full sequence is Eukaryotic translation initiation factor 3 subunit I (349 aa).

WD repeat units lie at residues 8-49 (GHER…GTLE), 51-91 (HIGT…QSWE), 93-135 (PTPV…DYTK), 148-187 (SDAKKVTVAGWSANGDFIIAGHEDGYVSKYNSSTGEFIET), 197-239 (EKIA…KVYK), and 295-336 (GHFG…FEFD).

The protein belongs to the eIF-3 subunit I family. In terms of assembly, component of the eukaryotic translation initiation factor 3 (eIF-3) complex.

It is found in the cytoplasm. In terms of biological role, component of the eukaryotic translation initiation factor 3 (eIF-3) complex, which is involved in protein synthesis of a specialized repertoire of mRNAs and, together with other initiation factors, stimulates binding of mRNA and methionyl-tRNAi to the 40S ribosome. The eIF-3 complex specifically targets and initiates translation of a subset of mRNAs involved in cell proliferation. The polypeptide is Eukaryotic translation initiation factor 3 subunit I (Debaryomyces hansenii (strain ATCC 36239 / CBS 767 / BCRC 21394 / JCM 1990 / NBRC 0083 / IGC 2968) (Yeast)).